The primary structure comprises 232 residues: Histone H1.X (232 aa).

Residues 36–112 (HHPSYMDMIK…GATGSFRMGK (77 aa)) enclose the H15 domain. The disordered stretch occupies residues 142 to 232 (ISKAEKTKPS…LRTGTRKSYC (91 aa)). Over residues 159–197 (KKGKPISTMKKRGVMSKKRSSKNKMAPKAKSHGLKKKGP) the composition is skewed to basic residues.

It belongs to the histone H1/H5 family.

It is found in the nucleus. It localises to the chromosome. The polypeptide is Histone H1.X (hil-1) (Caenorhabditis elegans).